The primary structure comprises 510 residues: Anaerobic nitric oxide reductase transcription regulator NorR (510 aa).

A Sigma-54 factor interaction domain is found at 188 to 417; the sequence is IIGNSQGMRT…LEHVIKRAAV (230 aa). ATP contacts are provided by residues 216 to 223 and 279 to 288; these read GETGVGKE and ADGGTLFLDE. Residues 486–505 constitute a DNA-binding region (H-T-H motif); the sequence is WAATARQLELDSGNLHRLAK.

It participates in nitrogen metabolism; nitric oxide reduction. Required for the expression of anaerobic nitric oxide (NO) reductase, acts as a transcriptional activator for at least the norVW operon. Activation also requires sigma-54. This chain is Anaerobic nitric oxide reductase transcription regulator NorR, found in Vibrio vulnificus (strain YJ016).